Here is a 407-residue protein sequence, read N- to C-terminus: Inhibin beta B chain (407 aa).

The N-terminal stretch at 1–28 (MDGLPGRALGAACLLLLAAGWLGPEAWG) is a signal peptide. Residues 27 to 60 (WGSPTPPPSPAAPPPPPPPGALGGSQDTCTSCGG) form a disordered region. The propeptide occupies 29-292 (SPTPPPSPAA…VDSRHRIRKR (264 aa)). A compositionally biased stretch (pro residues) spans 30 to 46 (PTPPPSPAAPPPPPPPG). Asn-93 carries an N-linked (GlcNAc...) asparagine glycan. Cystine bridges form between Cys-296/Cys-304, Cys-303/Cys-372, Cys-332/Cys-404, and Cys-336/Cys-406.

This sequence belongs to the TGF-beta family. As to quaternary structure, dimeric, linked by one or more disulfide bonds. Inhibin B is a dimer of alpha and beta-B. Activin B is a homodimer of beta-B. Activin AB is a dimer of beta-A and beta-B. Interacts with FST and FSTL3.

The protein resides in the secreted. Functionally, inhibins and activins inhibit and activate, respectively, the secretion of follitropin by the pituitary gland. Inhibins/activins are involved in regulating a number of diverse functions such as hypothalamic and pituitary hormone secretion, gonadal hormone secretion, germ cell development and maturation, erythroid differentiation, insulin secretion, nerve cell survival, embryonic axial development or bone growth, depending on their subunit composition. Inhibins appear to oppose the functions of activins. Activin B is a dimer of alpha and beta-B that plays a role in several essential biological processes including embryonic development, stem cell maintenance and differentiation, haematopoiesis, cell proliferation and wound healing. Signals through type I receptor ACVR1C, abundantly expressed in pancreatic beta cells, and type II receptors like ACVR2A. Upon ligand binding, these receptors phosphorylate intracellular signaling mediators SMAD2 and SMAD3, which form a complex with SMAD4, translocate to the nucleus, and regulate gene expression. Plays a crucial role in the induction of hepcidin by inflammation through activation of ACVR1C and subsequent phosphorylation of SMAD1/5/8. Regulates adipocyte lipid metabolism by decreasing non-esterified fatty acids and glycerol release and increases intracellular triglyceride content. Stimulates wound healing by promoting cell migration and hair follicle regeneration through the JNK and ERK signaling pathways downstream of RHOA. Its function is as follows. Inhibin B is a dimer of alpha and beta-B that plays a crucial role in the regulation of the reproductive system by inhibiting the secretion of follicle-stimulating hormone (FSH) from the anterior pituitary gland. Thereby, maintains reproductive homeostasis in both males and females. Acts as a more potent suppressor of FSH release than inhibin A. Functions as competitive receptor antagonist binding activin type II receptors with high affinity in the presence of the TGF-beta type III coreceptor/TGFBR3L. The polypeptide is Inhibin beta B chain (INHBB) (Sus scrofa (Pig)).